A 509-amino-acid chain; its full sequence is Probable triacylglyceride transporter ML0556 (509 aa).

Helical transmembrane passes span 48–68 (RITWIVTMYLLGYIAAMPLLS), 78–98 (LLLQVSLAGFAIGSVMTALAG), 112–132 (IQGVASGALLPITLALGADLW), 146–166 (AAQELGSVLGPLYGIFIVWLF), 171–191 (YVFWINIPLTAIAMLMIQVSL), 203–223 (VDVVGGVLLAIALGLVVIGLY), 232–252 (VLPSYGVPVLVGGIVATVAFA), 272–292 (PFLSALGASVAAGAALMVTLV), 309–329 (AAGLLVWFLIALPIGAVLGGW), 339–359 (MTFVGLLITAGGYWLISHWPV), 381–403 (LLVAGLGLGLVIGPLSSATLRVV), 410–430 (IASAAVVVARMTGMLIGVAAL), and 477–497 (IFMITAIVCVIGALLGLLISS).

Belongs to the major facilitator superfamily.

The protein resides in the cell inner membrane. In terms of biological role, in association with lipoprotein LprG probably transports triacylglycerides (TAG) across the inner cell membrane into the periplasm; TAG probably regulates lipid metabolism and growth regulation. May be an efflux transporter and involved in maintaining correct cell wall permeability. Probably required with LprG for normal surface localization of lipoarabinomannan (LAM). The sequence is that of Probable triacylglyceride transporter ML0556 from Mycobacterium leprae (strain TN).